The following is a 341-amino-acid chain: Large ribosomal subunit protein uL29m (341 aa).

The disordered stretch occupies residues 44 to 74; it reads LARTRYTKPKPKPPRRSKVRAPTQTTHHDTD. Residues 48 to 62 show a composition bias toward basic residues; that stretch reads RYTKPKPKPPRRSKV.

Belongs to the universal ribosomal protein uL29 family. In terms of assembly, component of the mitochondrial large ribosomal subunit. Mature mitochondrial ribosomes consist of a small (37S) and a large (54S) subunit. The 37S subunit contains at least 33 different proteins and 1 molecule of RNA (15S). The 54S subunit contains at least 45 different proteins and 1 molecule of RNA (21S).

The protein resides in the mitochondrion. The sequence is that of Large ribosomal subunit protein uL29m (MRPL4) from Eremothecium gossypii (strain ATCC 10895 / CBS 109.51 / FGSC 9923 / NRRL Y-1056) (Yeast).